The primary structure comprises 98 residues: Phosphoribosyl-ATP pyrophosphatase (98 aa).

It belongs to the PRA-PH family.

It localises to the cytoplasm. The enzyme catalyses 1-(5-phospho-beta-D-ribosyl)-ATP + H2O = 1-(5-phospho-beta-D-ribosyl)-5'-AMP + diphosphate + H(+). It functions in the pathway amino-acid biosynthesis; L-histidine biosynthesis; L-histidine from 5-phospho-alpha-D-ribose 1-diphosphate: step 2/9. In Pelotomaculum thermopropionicum (strain DSM 13744 / JCM 10971 / SI), this protein is Phosphoribosyl-ATP pyrophosphatase.